Consider the following 1526-residue polypeptide: High affinity cGMP-specific 3',5'-cyclic phosphodiesterase 9A (1526 aa).

A compositionally biased stretch (low complexity) spans 1–43 (MYQDSGCSSSSSRRGSSSAAAATSTAATAAETAAAAAATTTSS). Disordered regions lie at residues 1–48 (MYQD…DEET), 266–348 (SSRS…SGTA), and 393–476 (RHHH…ASDC). 2 stretches are compositionally biased toward basic and acidic residues: residues 270–282 (RSSE…HEQD) and 305–314 (EHPSEKPERT). Composition is skewed to low complexity over residues 324–348 (IAVT…SGTA) and 401–440 (QQHQ…ATAT). Polar residues predominate over residues 441 to 462 (PSVEQPATSGTTNIHLQPTSLP). Residues 664–985 (VKRRFLEICD…EYYRRLNDAQ (322 aa)) enclose the PDEase domain. Residue H740 is the Proton donor of the active site. 3',5'-cyclic GMP is bound at residue 740–744 (HNFRH). 4 residues coordinate Zn(2+): H744, H780, D781, and D890. 3',5'-cyclic GMP-binding residues include D781 and D890. D781 serves as a coordination point for Mg(2+). Disordered stretches follow at residues 986–1170 (TKTR…SSGG), 1265–1284 (TEAD…KKIP), 1314–1351 (SNGS…GSSW), 1372–1406 (RFGS…DGLG), and 1469–1496 (RYSS…LTTG). A compositionally biased stretch (low complexity) spans 993–1005 (ADSNTSATSDSNS). A compositionally biased stretch (gly residues) spans 1033 to 1057 (NSQGSGGGGGGGGGGGAGGGTGSGC). Residues 1065 to 1093 (VSPQMPRSGSGISVKSRRSIPSQKSASRT) show a composition bias toward polar residues. Residues 1125-1136 (VAEKTSKFKVDT) show a composition bias toward basic and acidic residues. Low complexity predominate over residues 1139–1148 (SSNRSKSSHS). The segment covering 1314–1324 (SNGSTRSSASS) has biased composition (low complexity). Positions 1325–1340 (GRGGSGVPGGSGGSGM) are enriched in gly residues. 2 stretches are compositionally biased toward low complexity: residues 1341 to 1350 (PGPSAGSGSS) and 1375 to 1397 (STRS…NANG). Residues 1470 to 1486 (YSSNDSSRHPSNNTLQS) show a composition bias toward polar residues.

It belongs to the cyclic nucleotide phosphodiesterase family. PDE9 subfamily. Zn(2+) serves as cofactor. It depends on Mg(2+) as a cofactor. Expressed in Malpighian tubules and adult fly head.

The catalysed reaction is 3',5'-cyclic GMP + H2O = GMP + H(+). It functions in the pathway purine metabolism; 3',5'-cyclic GMP degradation; GMP from 3',5'-cyclic GMP: step 1/1. Functionally, specifically hydrolyzes the second messenger cGMP, which is a key regulator of many important physiological processes. Highly specific: compared to other members of the cyclic nucleotide phosphodiesterase family, has the highest affinity and selectivity for cGMP. This chain is High affinity cGMP-specific 3',5'-cyclic phosphodiesterase 9A, found in Drosophila melanogaster (Fruit fly).